We begin with the raw amino-acid sequence, 629 residues long: 1-deoxy-D-xylulose-5-phosphate synthase (629 aa).

Residues His-72 and 113-115 (GHA) each bind thiamine diphosphate. Asp-144 lines the Mg(2+) pocket. Residues 145–146 (GA), Asn-174, Tyr-287, and Glu-370 each bind thiamine diphosphate. Mg(2+) is bound at residue Asn-174.

This sequence belongs to the transketolase family. DXPS subfamily. Homodimer. Mg(2+) is required as a cofactor. The cofactor is thiamine diphosphate.

The enzyme catalyses D-glyceraldehyde 3-phosphate + pyruvate + H(+) = 1-deoxy-D-xylulose 5-phosphate + CO2. It functions in the pathway metabolic intermediate biosynthesis; 1-deoxy-D-xylulose 5-phosphate biosynthesis; 1-deoxy-D-xylulose 5-phosphate from D-glyceraldehyde 3-phosphate and pyruvate: step 1/1. Functionally, catalyzes the acyloin condensation reaction between C atoms 2 and 3 of pyruvate and glyceraldehyde 3-phosphate to yield 1-deoxy-D-xylulose-5-phosphate (DXP). This chain is 1-deoxy-D-xylulose-5-phosphate synthase, found in Prochlorococcus marinus (strain MIT 9215).